A 417-amino-acid polypeptide reads, in one-letter code: Guanine nucleotide-exchange factor SEC12 (417 aa).

Residues 1–388 (MGRRRGVELY…QLHLLPSRRS (388 aa)) are Cytoplasmic-facing. Residue tyrosine 10 is modified to 3'-nitrotyrosine. A disordered region spans residues 101 to 135 (KGSKAEKSGSKEQGPRQRKGAAPAEKKSGAEVHPE). Composition is skewed to basic and acidic residues over residues 103-115 (SKAEKSGSKEQGP) and 124-135 (AEKKSGAEVHPE). WD repeat units follow at residues 152–191 (STEPLQKVVCFNHDNTLLATGGSDGHVRVWKVPSLEKVLE), 194–232 (AHEGEIGDLALGPDGKLVTVGWDFKASVWQKDQLVTQLQ), and 298–337 (CGHEVISCLTVSESGTFLGLGTVTGSVAIYIAFSLQRLYY). The chain crosses the membrane as a helical span at residues 389 to 409 (VPVWLLLLLCVGLIIVTILLL). Residues 410–417 (QSAFPGFL) are Lumenal-facing.

Interacts with SAR1B (GDP-bound form). Interacts with MIA2; recruits PREB to endoplasmic reticulum exit sites. Interacts with CIDEB; facilitating loading of SCAP-SREBP into COPII vesicles.

The protein localises to the endoplasmic reticulum membrane. Its subcellular location is the nucleus. Its function is as follows. Guanine nucleotide exchange factor (GEF) that regulates the assembly of the coat protein complex II/COPII in endoplasmic reticulum (ER) to Golgi vesicle-mediated transport. Selectively activates SAR1A and SAR1B by promoting the exchange of guanosine diphosphate (GDP) for guanosine triphosphate (GTP) in these small GTPases. In their activated GTP-bound state, SAR1A and SAR1B insert into the membrane of the endoplasmic reticulum where they recruit the remainder of the coat protein complex II/COPII which is responsible for both the sorting of proteins and the deformation and budding of membranes into vesicles destined to the Golgi. In terms of biological role, was first identified based on its probable role in the regulation of pituitary gene transcription. Binds to the prolactin gene (PRL) promoter and seems to activate transcription. In Rattus norvegicus (Rat), this protein is Guanine nucleotide-exchange factor SEC12.